A 492-amino-acid polypeptide reads, in one-letter code: Bifunctional protein GlmU (492 aa).

The pyrophosphorylase stretch occupies residues 1–241; the sequence is MTFRGDTAVV…SALVAGVNDR (241 aa). UDP-N-acetyl-alpha-D-glucosamine contacts are provided by residues 12–15, Lys-26, Gln-83, and 88–89; these read LAAG and GT. Asp-114 contacts Mg(2+). Residues Gly-151, Glu-166, Asn-181, and Asn-239 each coordinate UDP-N-acetyl-alpha-D-glucosamine. Asn-239 is a Mg(2+) binding site. Residues 242–262 form a linker region; it reads VQLAQLGAELNRRIVAAHQMA. Positions 263–492 are N-acetyltransferase; sequence GVTVIDPATT…TPPPDADQTP (230 aa). The UDP-N-acetyl-alpha-D-glucosamine site is built by Arg-344 and Lys-362. His-374 acts as the Proton acceptor in catalysis. The UDP-N-acetyl-alpha-D-glucosamine site is built by Tyr-377 and Asn-388. Residues Ala-391, 397 to 398, and Ala-434 contribute to the acetyl-CoA site; that span reads NY. Positions 451 to 492 are disordered; the sequence is GGPQRNIEDWVQQKRPGTPSAEAARKASAEQSTPPPDADQTP. Positions 483-492 are enriched in pro residues; sequence TPPPDADQTP.

This sequence in the N-terminal section; belongs to the N-acetylglucosamine-1-phosphate uridyltransferase family. In the C-terminal section; belongs to the transferase hexapeptide repeat family. In terms of assembly, homotrimer. Mg(2+) is required as a cofactor.

It localises to the cytoplasm. It catalyses the reaction alpha-D-glucosamine 1-phosphate + acetyl-CoA = N-acetyl-alpha-D-glucosamine 1-phosphate + CoA + H(+). It carries out the reaction N-acetyl-alpha-D-glucosamine 1-phosphate + UTP + H(+) = UDP-N-acetyl-alpha-D-glucosamine + diphosphate. It participates in nucleotide-sugar biosynthesis; UDP-N-acetyl-alpha-D-glucosamine biosynthesis; N-acetyl-alpha-D-glucosamine 1-phosphate from alpha-D-glucosamine 6-phosphate (route II): step 2/2. Its pathway is nucleotide-sugar biosynthesis; UDP-N-acetyl-alpha-D-glucosamine biosynthesis; UDP-N-acetyl-alpha-D-glucosamine from N-acetyl-alpha-D-glucosamine 1-phosphate: step 1/1. The protein operates within bacterial outer membrane biogenesis; LPS lipid A biosynthesis. Its function is as follows. Catalyzes the last two sequential reactions in the de novo biosynthetic pathway for UDP-N-acetylglucosamine (UDP-GlcNAc). The C-terminal domain catalyzes the transfer of acetyl group from acetyl coenzyme A to glucosamine-1-phosphate (GlcN-1-P) to produce N-acetylglucosamine-1-phosphate (GlcNAc-1-P), which is converted into UDP-GlcNAc by the transfer of uridine 5-monophosphate (from uridine 5-triphosphate), a reaction catalyzed by the N-terminal domain. This is Bifunctional protein GlmU from Mycobacterium marinum (strain ATCC BAA-535 / M).